A 493-amino-acid polypeptide reads, in one-letter code: Glycerol kinase (493 aa).

Position 11 (T11) interacts with ADP. 3 residues coordinate ATP: T11, T12, and S13. A sn-glycerol 3-phosphate-binding site is contributed by T11. R15 lines the ADP pocket. Sn-glycerol 3-phosphate-binding residues include R80, E81, Y132, and D241. Positions 80, 81, 132, 241, and 242 each coordinate glycerol. The ADP site is built by T263 and G306. 4 residues coordinate ATP: T263, G306, Q310, and G408. Position 408 (G408) interacts with ADP.

The protein belongs to the FGGY kinase family.

The catalysed reaction is glycerol + ATP = sn-glycerol 3-phosphate + ADP + H(+). It functions in the pathway polyol metabolism; glycerol degradation via glycerol kinase pathway; sn-glycerol 3-phosphate from glycerol: step 1/1. Its activity is regulated as follows. Inhibited by fructose 1,6-bisphosphate (FBP). Functionally, key enzyme in the regulation of glycerol uptake and metabolism. Catalyzes the phosphorylation of glycerol to yield sn-glycerol 3-phosphate. This is Glycerol kinase from Cereibacter sphaeroides (strain ATCC 17025 / ATH 2.4.3) (Rhodobacter sphaeroides).